A 196-amino-acid chain; its full sequence is DNA polymerase epsilon subunit D (196 aa).

Positions 125-196 (RKKEKLDSGE…ETRVQNLEQT (72 aa)) are disordered. A compositionally biased stretch (acidic residues) spans 133 to 143 (GEVDADGDIDM). Positions 144 to 159 (GEDKENVPVEKVKEHD) are enriched in basic and acidic residues. A compositionally biased stretch (acidic residues) spans 160-173 (EIEEQGDALQDVEE). Residues 174 to 188 (SSEKKQKTESQDVET) are compositionally biased toward basic and acidic residues. Phosphoserine; by ATM or ATR is present on S183.

As to quaternary structure, DNA polymerase epsilon is a heterotetramer consisting of POL2, DPB2, DPB3 and DPB4. Component of the ISW2 complex, which at least consists of ISW2, ITC1, DLS1 and DPB4.

It localises to the nucleus. In terms of biological role, as accessory component of the DNA polymerase epsilon (DNA polymerase II) participates in chromosomal DNA replication. It is required during synthesis of the leading and lagging DNA strands at the replication fork and binds at/or near replication origins and moves along DNA with the replication fork. It has 3'-5' proofreading exonuclease activity that correct errors arising during DNA replication. It is also involved in DNA synthesis during DNA repair. Also functions as a component of the ISW2 complex, which acts in remodeling the chromatin by catalyzing an ATP-dependent alteration in the structure of nucleosomal DNA. The ISW2 complex is involved in coordinating transcriptional repression and in inheritance of telomeric silencing. It is involved in repression of MAT a-specific genes, INO1, and early meiotic genes during mitotic growth dependent upon transcription factor UME6 and in a parallel pathway to the RPD3-SIN3 histone deacetylase complex. The protein is DNA polymerase epsilon subunit D (DPB4) of Saccharomyces cerevisiae (strain ATCC 204508 / S288c) (Baker's yeast).